Here is a 284-residue protein sequence, read N- to C-terminus: Bifunctional protein FolD (284 aa).

NADP(+) contacts are provided by residues 165–167 (GRG), T192, and V233.

It belongs to the tetrahydrofolate dehydrogenase/cyclohydrolase family. Homodimer.

It carries out the reaction (6R)-5,10-methylene-5,6,7,8-tetrahydrofolate + NADP(+) = (6R)-5,10-methenyltetrahydrofolate + NADPH. It catalyses the reaction (6R)-5,10-methenyltetrahydrofolate + H2O = (6R)-10-formyltetrahydrofolate + H(+). It functions in the pathway one-carbon metabolism; tetrahydrofolate interconversion. Catalyzes the oxidation of 5,10-methylenetetrahydrofolate to 5,10-methenyltetrahydrofolate and then the hydrolysis of 5,10-methenyltetrahydrofolate to 10-formyltetrahydrofolate. The sequence is that of Bifunctional protein FolD from Corynebacterium efficiens (strain DSM 44549 / YS-314 / AJ 12310 / JCM 11189 / NBRC 100395).